The sequence spans 633 residues: Phosphomethylpyrimidine synthase (633 aa).

Substrate is bound by residues Asn245, Met274, Tyr303, His339, 359 to 361 (SRG), 400 to 403 (DGLR), and Glu439. His443 contacts Zn(2+). Tyr466 contributes to the substrate binding site. His507 provides a ligand contact to Zn(2+). Residues Cys587, Cys590, and Cys595 each contribute to the [4Fe-4S] cluster site.

It belongs to the ThiC family. Homodimer. It depends on [4Fe-4S] cluster as a cofactor.

The enzyme catalyses 5-amino-1-(5-phospho-beta-D-ribosyl)imidazole + S-adenosyl-L-methionine = 4-amino-2-methyl-5-(phosphooxymethyl)pyrimidine + CO + 5'-deoxyadenosine + formate + L-methionine + 3 H(+). It functions in the pathway cofactor biosynthesis; thiamine diphosphate biosynthesis. In terms of biological role, catalyzes the synthesis of the hydroxymethylpyrimidine phosphate (HMP-P) moiety of thiamine from aminoimidazole ribotide (AIR) in a radical S-adenosyl-L-methionine (SAM)-dependent reaction. The polypeptide is Phosphomethylpyrimidine synthase (Neisseria meningitidis serogroup C (strain 053442)).